An 85-amino-acid polypeptide reads, in one-letter code: MGRSCKVIREDLANCLLHSDCMFVKKKSARECLKNKDELPEECKNLIEAYGECKRQMLDMTKRYRIAPEKNTDQDTEKPSNVDEQ.

The region spanning 18–61 (HSDCMFVKKKSARECLKNKDELPEECKNLIEAYGECKRQMLDMT) is the CHCH domain. Residues 21–32 (CMFVKKKSAREC) carry the Cx10C motif motif. Disulfide bonds link Cys21/Cys53 and Cys32/Cys43. Positions 43-53 (CKNLIEAYGEC) match the Cx9C motif motif. Residues 65 to 85 (RIAPEKNTDQDTEKPSNVDEQ) are disordered.

Belongs to the PET191 family.

The protein resides in the mitochondrion. Functionally, involved in the assembly of cytochrome c oxidase. The polypeptide is Mitochondrial protein pet191 homolog (Schizosaccharomyces pombe (strain 972 / ATCC 24843) (Fission yeast)).